Here is an 872-residue protein sequence, read N- to C-terminus: MSFGGMFDGAGSGVFSYDAGGGGGGGGVHNSRLLPTPPVPKPGGGFAAPGLSLGLQTMDGSQLGDVNRSLAMMGNGGSGSGGDGDSLGRGREEENDSRSGSDNLDGASGDELDPDNSNPRKKKKRYHRHTPQQIQELEAVFKECPHPDEKQRMELSRRLNLESRQVKFWFQNRRTQMKQTQIERHENALLRQENDKLRAENMTIREAMRNPMCASCGGAAVLGEVSLEEQHLRIENARLKDELDRVCALAGKFLGRPISSISSPGPPSLQACSGLELGVGSNGGFGLGALGASAAMQSIPDLMGGSSGLTGGPVGSAAMRLPAGIGGLDGAMHAAAADGGAIDRAVLLELALAAMDELVKVAQMDEPLWLPSLDGGFETLNYDEYHRAFARVVGQCPAGYVSEATRESGIAIISSVDLVDSLMDAPRWSEMFPCVVARASTTDIISSGMGGTRSGSIQLMHAELQVLSPLVPIREVVFLRFCKQHAEGLWAVVDVSVDAVLRPDQNGGGGSSSSSYMGCRLLPTGCIVQDMNNGYSKVTWVVHAEYDETAAHQLYRPLLRSGQALGARRWLASLQRQCQYLAILCSNSLPARDHAAITPVGRRSMLKLAQRMTDNFCAGVCASAAQKWRRLDEWRGEGGGGGGGGGGDGEDKVRMMARHSVGAPGEPPGVVLSATTSVRLPGTLPQRVFDYLRDEQRRGDWDILANGEAMQEMDHIAKGQHHGNAVSLLRPNATSGNQNNMLILQETCTDSSGSLVVYAPVDVQSMHVVMNGGDSAYVSLLPSGFAILPDGHNNGASPSPAEVGSGASPNSAAGGGGGSNNTGSLVTVAFQILVNNLPTAKLTVESVDTVSNLLSCTIQKIKSALQASIISP.

Disordered regions lie at residues 28–53 (VHNSRLLPTPPVPKPGGGFAAPGLSL) and 67–130 (NRSL…HRHT). Positions 74–85 (GNGGSGSGGDGD) are enriched in gly residues. Residues 86–99 (SLGRGREEENDSRS) are compositionally biased toward basic and acidic residues. A compositionally biased stretch (basic residues) spans 119–130 (PRKKKKRYHRHT). Positions 122-181 (KKKRYHRHTPQQIQELEAVFKECPHPDEKQRMELSRRLNLESRQVKFWFQNRRTQMKQTQ) form a DNA-binding region, homeobox. Positions 176 to 248 (QMKQTQIERH…LKDELDRVCA (73 aa)) form a coiled coil. The START domain maps to 340–583 (GAIDRAVLLE…LQRQCQYLAI (244 aa)). Positions 792 to 818 (HNNGASPSPAEVGSGASPNSAAGGGGG) are disordered.

The protein belongs to the HD-ZIP homeobox family. Class IV subfamily.

Its subcellular location is the nucleus. Probable transcription factor. In Oryza sativa subsp. japonica (Rice), this protein is Homeobox-leucine zipper protein ROC6 (ROC6).